The following is a 450-amino-acid chain: Phosphoglucosamine mutase (450 aa).

Ser-102 (phosphoserine intermediate) is an active-site residue. Mg(2+) is bound by residues Ser-102, Asp-243, Asp-245, and Asp-247. Ser-102 is modified (phosphoserine).

The protein belongs to the phosphohexose mutase family. Requires Mg(2+) as cofactor. In terms of processing, activated by phosphorylation.

It carries out the reaction alpha-D-glucosamine 1-phosphate = D-glucosamine 6-phosphate. In terms of biological role, catalyzes the conversion of glucosamine-6-phosphate to glucosamine-1-phosphate. This is Phosphoglucosamine mutase from Rhizobium rhizogenes (strain K84 / ATCC BAA-868) (Agrobacterium radiobacter).